The chain runs to 262 residues: Glutamate racemase (262 aa).

Substrate contacts are provided by residues 5 to 6 and 37 to 38; these read DS and YG. Cys69 (proton donor/acceptor) is an active-site residue. 70–71 serves as a coordination point for substrate; that stretch reads NT. Cys181 (proton donor/acceptor) is an active-site residue. 182 to 183 is a substrate binding site; that stretch reads TH.

Belongs to the aspartate/glutamate racemases family.

It catalyses the reaction L-glutamate = D-glutamate. Its pathway is cell wall biogenesis; peptidoglycan biosynthesis. Its function is as follows. Provides the (R)-glutamate required for cell wall biosynthesis. In Buchnera aphidicola subsp. Acyrthosiphon pisum (strain Tuc7), this protein is Glutamate racemase.